Consider the following 543-residue polypeptide: CTP synthase (543 aa).

The tract at residues 1-265 (MTRYIFVTGG…DDIVVERFGL (265 aa)) is amidoligase domain. A CTP-binding site is contributed by serine 13. Serine 13 contacts UTP. ATP-binding positions include 14-19 (SLGKGI) and aspartate 71. Residues aspartate 71 and glutamate 139 each contribute to the Mg(2+) site. CTP contacts are provided by residues 146-148 (DIE), 186-191 (KTKPTQ), and lysine 222. UTP-binding positions include 186 to 191 (KTKPTQ) and lysine 222. The Glutamine amidotransferase type-1 domain occupies 290 to 541 (TIAMVGKYME…VNAALAQKAR (252 aa)). Residue glycine 351 participates in L-glutamine binding. Cysteine 378 functions as the Nucleophile; for glutamine hydrolysis in the catalytic mechanism. Residues 379–382 (LGMQ), glutamate 402, and arginine 469 each bind L-glutamine. Catalysis depends on residues histidine 514 and glutamate 516.

It belongs to the CTP synthase family. As to quaternary structure, homotetramer.

The enzyme catalyses UTP + L-glutamine + ATP + H2O = CTP + L-glutamate + ADP + phosphate + 2 H(+). It carries out the reaction L-glutamine + H2O = L-glutamate + NH4(+). It catalyses the reaction UTP + NH4(+) + ATP = CTP + ADP + phosphate + 2 H(+). The protein operates within pyrimidine metabolism; CTP biosynthesis via de novo pathway; CTP from UDP: step 2/2. Its activity is regulated as follows. Allosterically activated by GTP, when glutamine is the substrate; GTP has no effect on the reaction when ammonia is the substrate. The allosteric effector GTP functions by stabilizing the protein conformation that binds the tetrahedral intermediate(s) formed during glutamine hydrolysis. Inhibited by the product CTP, via allosteric rather than competitive inhibition. Its function is as follows. Catalyzes the ATP-dependent amination of UTP to CTP with either L-glutamine or ammonia as the source of nitrogen. Regulates intracellular CTP levels through interactions with the four ribonucleotide triphosphates. This chain is CTP synthase, found in Azotobacter vinelandii (strain DJ / ATCC BAA-1303).